Consider the following 1520-residue polypeptide: DNA topoisomerase 2 top-2 (1520 aa).

Residues methionine 1–isoleucine 10 are compositionally biased toward acidic residues. Residues methionine 1–methionine 40 form a disordered region. Residues aspartate 12–alanine 34 show a composition bias toward basic and acidic residues. Residues asparagine 126, asparagine 155, serine 183–asparagine 185, glycine 196–lysine 203, and glutamine 411–lysine 413 contribute to the ATP site. The Toprim domain occupies cysteine 490–glutamate 607. Glutamate 496, aspartate 576, and aspartate 578 together coordinate Mg(2+). The Topo IIA-type catalytic domain occupies isoleucine 750–leucine 1219. Tyrosine 840 serves as the catalytic O-(5'-phospho-DNA)-tyrosine intermediate. The disordered stretch occupies residues alanine 1249–aspartate 1520. Basic and acidic residues predominate over residues threonine 1283–lysine 1320. Positions methionine 1342 to glutamate 1364 are enriched in acidic residues.

This sequence belongs to the type II topoisomerase family. As to quaternary structure, homodimer. Interacts with nmad-1; the interaction is required for localization of top-2 to DNA. Interacts with gcna-1; this interaction allows the resolution of topoisomerase 2 DNA-protein cross-links. Requires Mg(2+) as cofactor. It depends on Mn(2+) as a cofactor. Ca(2+) is required as a cofactor. In terms of tissue distribution, expressed in the hermaphrodite and male germline.

It is found in the nucleus. Its subcellular location is the nucleoplasm. It localises to the chromosome. The protein resides in the cytoplasm. The protein localises to the cytoskeleton. It is found in the spindle. It carries out the reaction ATP-dependent breakage, passage and rejoining of double-stranded DNA.. Control of topological states of DNA by transient breakage and subsequent rejoining of DNA strands. Topoisomerase II makes double-strand breaks. Essential during mitosis in the adult germline and during embryogenesis for proper segregation of daughter chromosomes. Required for centromere resolution during mitosis. Required for chromosome segregation in anaphase of meiosis I during spermatogenesis. Promotes cleavage furrow stability during cytokinesis upon the presence of chromatin obstructions. Promotes DNA break formation upon zygotic genome activation in the Z2 and Z3 primordial germ cells in L1 larvae, thereby activating a checkpoint response. Essential for embryogenesis. The chain is DNA topoisomerase 2 top-2 from Caenorhabditis elegans.